Here is a 188-residue protein sequence, read N- to C-terminus: Elongation factor P (188 aa).

The protein belongs to the elongation factor P family.

Its subcellular location is the cytoplasm. It participates in protein biosynthesis; polypeptide chain elongation. Its function is as follows. Involved in peptide bond synthesis. Stimulates efficient translation and peptide-bond synthesis on native or reconstituted 70S ribosomes in vitro. Probably functions indirectly by altering the affinity of the ribosome for aminoacyl-tRNA, thus increasing their reactivity as acceptors for peptidyl transferase. In Leptospira borgpetersenii serovar Hardjo-bovis (strain JB197), this protein is Elongation factor P.